The primary structure comprises 246 residues: Protein lin-37 homolog (246 aa).

Residue Met-1 is modified to N-acetylmethionine. Glycyl lysine isopeptide (Lys-Gly) (interchain with G-Cter in SUMO2) cross-links involve residues Lys-5 and Lys-7. Over residues 36–55 (DRERLDEEPGKTSLDTHNKD) the composition is skewed to basic and acidic residues. Disordered regions lie at residues 36-90 (DRER…GGPQ) and 127-209 (PTVR…LIYR). 2 positions are modified to phosphoserine: Ser-135 and Ser-138. Positions 163–172 (LPPPTAPGPP) are enriched in pro residues. Residue Thr-167 is modified to Phosphothreonine. Residues Ser-182 and Ser-202 each carry the phosphoserine modification.

Component of the DREAM complex (also named LINC complex) at least composed of E2F4, E2F5, LIN9, LIN37, LIN52, LIN54, MYBL1, MYBL2, RBL1, RBL2, RBBP4, TFDP1 and TFDP2. The complex exists in quiescent cells where it represses cell cycle-dependent genes. It dissociates in S phase when LIN9, LIN37, LIN52 and LIN54 form a subcomplex that binds to MYBL2.

The sequence is that of Protein lin-37 homolog (LIN37) from Bos taurus (Bovine).